Reading from the N-terminus, the 466-residue chain is Adenosylhomocysteinase (466 aa).

T57, D132, and E192 together coordinate substrate. 193–195 (TTT) lines the NAD(+) pocket. Residues K222 and D226 each contribute to the substrate site. NAD(+) is bound by residues N227, 256-261 (GYGDVG), E279, N314, 335-337 (IGH), and N380.

This sequence belongs to the adenosylhomocysteinase family. Requires NAD(+) as cofactor.

Its subcellular location is the cytoplasm. It catalyses the reaction S-adenosyl-L-homocysteine + H2O = L-homocysteine + adenosine. Its pathway is amino-acid biosynthesis; L-homocysteine biosynthesis; L-homocysteine from S-adenosyl-L-homocysteine: step 1/1. Functionally, may play a key role in the regulation of the intracellular concentration of adenosylhomocysteine. This Sinorhizobium medicae (strain WSM419) (Ensifer medicae) protein is Adenosylhomocysteinase.